Consider the following 161-residue polypeptide: 2-C-methyl-D-erythritol 2,4-cyclodiphosphate synthase (161 aa).

2 residues coordinate a divalent metal cation: D11 and H13. 4-CDP-2-C-methyl-D-erythritol 2-phosphate contacts are provided by residues D11–H13 and H37–S38. Residue H45 participates in a divalent metal cation binding. Residues D59–G61, T135–E138, and R145 each bind 4-CDP-2-C-methyl-D-erythritol 2-phosphate.

It belongs to the IspF family. Homotrimer. It depends on a divalent metal cation as a cofactor.

The catalysed reaction is 4-CDP-2-C-methyl-D-erythritol 2-phosphate = 2-C-methyl-D-erythritol 2,4-cyclic diphosphate + CMP. Its pathway is isoprenoid biosynthesis; isopentenyl diphosphate biosynthesis via DXP pathway; isopentenyl diphosphate from 1-deoxy-D-xylulose 5-phosphate: step 4/6. Its function is as follows. Involved in the biosynthesis of isopentenyl diphosphate (IPP) and dimethylallyl diphosphate (DMAPP), two major building blocks of isoprenoid compounds. Catalyzes the conversion of 4-diphosphocytidyl-2-C-methyl-D-erythritol 2-phosphate (CDP-ME2P) to 2-C-methyl-D-erythritol 2,4-cyclodiphosphate (ME-CPP) with a corresponding release of cytidine 5-monophosphate (CMP). This Thermosynechococcus vestitus (strain NIES-2133 / IAM M-273 / BP-1) protein is 2-C-methyl-D-erythritol 2,4-cyclodiphosphate synthase.